Consider the following 255-residue polypeptide: Imidazole glycerol phosphate synthase subunit HisF (255 aa).

Catalysis depends on residues Asp11 and Asp130.

Belongs to the HisA/HisF family. In terms of assembly, heterodimer of HisH and HisF.

The protein localises to the cytoplasm. It carries out the reaction 5-[(5-phospho-1-deoxy-D-ribulos-1-ylimino)methylamino]-1-(5-phospho-beta-D-ribosyl)imidazole-4-carboxamide + L-glutamine = D-erythro-1-(imidazol-4-yl)glycerol 3-phosphate + 5-amino-1-(5-phospho-beta-D-ribosyl)imidazole-4-carboxamide + L-glutamate + H(+). The protein operates within amino-acid biosynthesis; L-histidine biosynthesis; L-histidine from 5-phospho-alpha-D-ribose 1-diphosphate: step 5/9. Its function is as follows. IGPS catalyzes the conversion of PRFAR and glutamine to IGP, AICAR and glutamate. The HisF subunit catalyzes the cyclization activity that produces IGP and AICAR from PRFAR using the ammonia provided by the HisH subunit. The chain is Imidazole glycerol phosphate synthase subunit HisF from Campylobacter jejuni subsp. jejuni serotype O:6 (strain 81116 / NCTC 11828).